The sequence spans 484 residues: Glutamate--tRNA ligase (484 aa).

The 'HIGH' region signature appears at 11 to 21; sequence PSPTGYLHIGN. The 'KMSKS' region motif lies at 252–256; the sequence is KLSKR. ATP is bound at residue Lys-255.

This sequence belongs to the class-I aminoacyl-tRNA synthetase family. Glutamate--tRNA ligase type 1 subfamily. In terms of assembly, monomer.

The protein localises to the cytoplasm. It catalyses the reaction tRNA(Glu) + L-glutamate + ATP = L-glutamyl-tRNA(Glu) + AMP + diphosphate. In terms of biological role, catalyzes the attachment of glutamate to tRNA(Glu) in a two-step reaction: glutamate is first activated by ATP to form Glu-AMP and then transferred to the acceptor end of tRNA(Glu). The polypeptide is Glutamate--tRNA ligase (Staphylococcus aureus (strain MRSA252)).